We begin with the raw amino-acid sequence, 273 residues long: Ribosomal RNA small subunit methyltransferase I (273 aa).

The protein belongs to the methyltransferase superfamily. RsmI family.

The protein localises to the cytoplasm. The catalysed reaction is cytidine(1402) in 16S rRNA + S-adenosyl-L-methionine = 2'-O-methylcytidine(1402) in 16S rRNA + S-adenosyl-L-homocysteine + H(+). In terms of biological role, catalyzes the 2'-O-methylation of the ribose of cytidine 1402 (C1402) in 16S rRNA. The sequence is that of Ribosomal RNA small subunit methyltransferase I from Xylella fastidiosa (strain 9a5c).